The sequence spans 1759 residues: Zinc finger protein castor homolog 1 (1759 aa).

2 disordered regions span residues 1–26 (MDLG…PKRK) and 46–175 (KRAD…SSLR). Basic and acidic residues-rich tracts occupy residues 77 to 88 (PRSEEDKRRAVI) and 137 to 160 (EEPS…KEDS). Positions 161-171 (GPSTRQASGEA) are enriched in polar residues. A Glycyl lysine isopeptide (Lys-Gly) (interchain with G-Cter in SUMO2) cross-link involves residue Lys-288. Residues 374–420 (SKYDVRGIQKPGPAKVPPTPSLAPAPLASVPSAPSAPGPGPEPPASL) form a disordered region. Over residues 387–396 (AKVPPTPSLA) the composition is skewed to pro residues. Low complexity predominate over residues 397 to 406 (PAPLASVPSA). The segment covering 407-417 (PSAPGPGPEPP) has biased composition (pro residues). 3 C2H2-type zinc fingers span residues 551 to 575 (YHCM…ENFH), 610 to 634 (FHCR…KSYH), and 668 to 692 (FHCI…KRKH). Disordered stretches follow at residues 686-723 (TSHK…SSND), 736-776 (SSLS…SGLL), 824-843 (VSSG…VASG), and 889-949 (ATFD…AVPA). Positions 687 to 698 (SHKRKHERRHIR) are enriched in basic residues. Residues 699–712 (SSGALGLPPSLLGA) show a composition bias toward low complexity. Phosphoserine is present on residues Ser-720 and Ser-721. Low complexity predominate over residues 736-764 (SSLSASPTSQQSSASLAAATAATEAGPSA). Over residues 925-939 (ASQDRSLDLTVKEPS) the composition is skewed to basic and acidic residues. Residue Lys-975 forms a Glycyl lysine isopeptide (Lys-Gly) (interchain with G-Cter in SUMO2) linkage. Residue Ser-981 is modified to Phosphoserine. The segment at 1031–1055 (FHCVVEECGALFSTLDGAIKHANFH) adopts a C2H2-type 4 zinc-finger fold. A disordered region spans residues 1067–1111 (TEAAFPASAAETKPPMAPSSPPVPPVTTATVSSLEGPAPSPASVP). The span at 1081-1091 (PMAPSSPPVPP) shows a compositional bias: pro residues. The C2H2-type 5 zinc finger occupies 1300 to 1324 (FHCIREGCQFSFLLKHQMTSHARKH). The segment at 1367–1392 (ESSTMDRSCSSTPVGNESTAAGNTIS) is disordered. 3 C2H2-type zinc fingers span residues 1457–1481 (YHCT…AQHH), 1515–1537 (FHCL…RKHH), and 1571–1595 (FHCT…KRKH). 2 disordered regions span residues 1589 to 1620 (DSHK…DGSL) and 1643 to 1736 (LGDA…AGAR). The span at 1655–1673 (AAPGPREGAAAAAAAAGES) shows a compositional bias: low complexity. The segment covering 1674–1723 (SQEDEEEELELPEEEAEDDEDEDDDEDDDDEDDDEDDDDEDLRTDSEESL) has biased composition (acidic residues). The segment covering 1724–1736 (PEAAAEAAGAGAR) has biased composition (low complexity).

Expressed in heart, lung, skeletal muscle, pancreas, testis, small intestine, and stomach, but it is not detectable in the adult brain.

It is found in the nucleus. Transcriptional activator. Involved in vascular assembly and morphogenesis through direct transcriptional regulation of EGFL7. In Homo sapiens (Human), this protein is Zinc finger protein castor homolog 1 (CASZ1).